The sequence spans 423 residues: Phosphoribosylamine--glycine ligase (423 aa).

The ATP-grasp domain maps to 107–312; that stretch reads KAFADRYGLP…LVPYLVACAN (206 aa). 133–193 contributes to the ATP binding site; it reads LELFEPPYVI…EEFLEGEIGS (61 aa). Positions 270, 282, and 284 each coordinate Mg(2+). Mn(2+) contacts are provided by glutamate 270, glutamate 282, and asparagine 284.

Belongs to the GARS family. It depends on Mg(2+) as a cofactor. The cofactor is Mn(2+).

The catalysed reaction is 5-phospho-beta-D-ribosylamine + glycine + ATP = N(1)-(5-phospho-beta-D-ribosyl)glycinamide + ADP + phosphate + H(+). The protein operates within purine metabolism; IMP biosynthesis via de novo pathway; N(1)-(5-phospho-D-ribosyl)glycinamide from 5-phospho-alpha-D-ribose 1-diphosphate: step 2/2. In Phenylobacterium zucineum (strain HLK1), this protein is Phosphoribosylamine--glycine ligase.